The sequence spans 156 residues: MQTTKNQDDLVRIFKSILKEERFGSQSEIVAALQAEGFGNINQSKVSRMLSKFGAVRTRNAKQEMVYCLPAELGVPTAGSPLKNLVLDVDHNQAMIVVRTSPGAAQLIARLLDSIGKPEGILGTIAGDDTIFICPSSIQDIADTLETIKSLFNYAE.

Belongs to the ArgR family.

The protein resides in the cytoplasm. Its pathway is amino-acid biosynthesis; L-arginine biosynthesis [regulation]. In terms of biological role, regulates arginine biosynthesis genes. In Shewanella putrefaciens (strain CN-32 / ATCC BAA-453), this protein is Arginine repressor.